Reading from the N-terminus, the 293-residue chain is Ribosomal RNA small subunit methyltransferase A (293 aa).

Residues Asn-29, Leu-31, Gly-56, Glu-77, Asp-102, and Asn-127 each contribute to the S-adenosyl-L-methionine site.

The protein belongs to the class I-like SAM-binding methyltransferase superfamily. rRNA adenine N(6)-methyltransferase family. RsmA subfamily.

It localises to the cytoplasm. It catalyses the reaction adenosine(1518)/adenosine(1519) in 16S rRNA + 4 S-adenosyl-L-methionine = N(6)-dimethyladenosine(1518)/N(6)-dimethyladenosine(1519) in 16S rRNA + 4 S-adenosyl-L-homocysteine + 4 H(+). In terms of biological role, specifically dimethylates two adjacent adenosines (A1518 and A1519) in the loop of a conserved hairpin near the 3'-end of 16S rRNA in the 30S particle. May play a critical role in biogenesis of 30S subunits. This Geobacillus kaustophilus (strain HTA426) protein is Ribosomal RNA small subunit methyltransferase A.